The chain runs to 78 residues: MSEVLPYGDEKLSPYGDGGDVGQVFSCRLQDTNNFFGAGQNKRPPKLGQIGRSKRVVIEDDRIDDVLKNMTDKAPPGV.

Positions asparagine 41 to lysine 68 are CAMK2 inhibitory domain.

This sequence belongs to the CAMK2N family. Interacts with CAMK2B; the presence of Ca(2+)/calmodulin increases the interaction but is not essential. Interacts with CAMK2A; this interaction requires CAMK2A activation by Ca(2+).

The protein resides in the synapse. It localises to the cell projection. It is found in the dendrite. The protein localises to the postsynaptic density. Its function is as follows. Potent and specific inhibitor of CaM-kinase II (CAMK2). Plays a role in the maintenance of long-term retrieval-induced memory in response to contextual fear. Modulates blood pressure and vascular reactivity via regulation of CAMK2 activity in addition to regulation of left ventricular mass. Mediates the NLRP3 inflammasome in cardiomyocytes via acting as an inhibitor of the MAPK14/p38 and MAPK8/JNK pathways, thereby regulating ventricular remodeling and cardiac rhythm post-myocardial infarction. Negatively effects insulin sensitivity and promotes lipid formation in adipose tissues independent of CAMK2 signaling. This chain is Calcium/calmodulin-dependent protein kinase II inhibitor 1 (CAMK2N1), found in Bos taurus (Bovine).